Reading from the N-terminus, the 385-residue chain is Rhomboid domain-containing protein 3 (385 aa).

The next 5 helical transmembrane spans lie at 13–33 (ALPL…LLGA), 58–78 (LGHT…TLGW), 93–113 (SAVL…LGLS), 146–166 (WLLP…PPFL), and 168–188 (LLCG…WLEL). The UBA domain occupies 322-361 (SVSSLRLQQLQHMGFPTEQAAVALAATGRVEGAVSLLVEG).

Its subcellular location is the membrane. The protein is Rhomboid domain-containing protein 3 (Rhbdd3) of Rattus norvegicus (Rat).